We begin with the raw amino-acid sequence, 108 residues long: UPF0235 protein RPB_0109 (108 aa).

The protein belongs to the UPF0235 family.

This is UPF0235 protein RPB_0109 from Rhodopseudomonas palustris (strain HaA2).